Consider the following 777-residue polypeptide: Double zinc ribbon and ankyrin repeat-containing protein 1 (777 aa).

Residues 161–176 show a composition bias toward basic and acidic residues; sequence QVGERTDPKTLKDLRF. Residues 161-202 are disordered; the sequence is QVGERTDPKTLKDLRFSESPLEIPAHSGGSGSRPPTRQSQSP. A compositionally biased stretch (polar residues) spans 193–202; that stretch reads RPPTRQSQSP. A Phosphoserine modification is found at Ser201. 2 DZANK-type zinc fingers span residues 230–289 and 358–406; these read CAHC…CVVC and CSRC…GSCG. ANK repeat units lie at residues 442 to 473 and 477 to 506; these read NIPL…LLAK and EIAS…GYWR.

In terms of assembly, interacts with NINL. Associates with DYNC1H1 and multiple dynein intermediate and light chains as well as actin-binding proteins.

Its subcellular location is the cytoplasm. The protein localises to the cytoskeleton. It localises to the microtubule organizing center. The protein resides in the centrosome. It is found in the cilium basal body. In terms of biological role, involved in vesicle transport in photoreceptor cells. This chain is Double zinc ribbon and ankyrin repeat-containing protein 1 (DZANK1), found in Macaca fascicularis (Crab-eating macaque).